We begin with the raw amino-acid sequence, 525 residues long: NAD(P)H-quinone oxidoreductase chain 4 1 (525 aa).

14 helical membrane passes run 6–26, 36–56, 91–111, 115–135, 136–156, 169–189, 212–232, 243–263, 277–297, 314–334, 335–355, 375–397, 417–437, and 464–484; these read FPWL…IPII, WYAL…FYTS, LIIL…PVTL, LFYF…AVQD, LLLF…LLAI, FILY…TMAF, LLLY…IPLH, TAPA…YALI, FAPV…LTSF, MGFV…GAVL, QMVS…ATYD, IFAM…GFVA, VIVV…LLSM, and VFVI…PKLL.

It belongs to the complex I subunit 4 family.

It localises to the cellular thylakoid membrane. It catalyses the reaction a plastoquinone + NADH + (n+1) H(+)(in) = a plastoquinol + NAD(+) + n H(+)(out). The catalysed reaction is a plastoquinone + NADPH + (n+1) H(+)(in) = a plastoquinol + NADP(+) + n H(+)(out). Functionally, NDH-1 shuttles electrons from NAD(P)H, via FMN and iron-sulfur (Fe-S) centers, to quinones in the respiratory chain. The immediate electron acceptor for the enzyme in this species is believed to be plastoquinone. Couples the redox reaction to proton translocation (for every two electrons transferred, four hydrogen ions are translocated across the cytoplasmic membrane), and thus conserves the redox energy in a proton gradient. This is NAD(P)H-quinone oxidoreductase chain 4 1 from Trichormus variabilis (strain ATCC 29413 / PCC 7937) (Anabaena variabilis).